The primary structure comprises 333 residues: L-lactate dehydrogenase (333 aa).

NAD(+) contacts are provided by residues 29–57 and Arg-99; that span reads GQVG…VADK. Positions 106, 138, and 169 each coordinate substrate. NAD(+) is bound at residue Asn-138. His-193 (proton acceptor) is an active-site residue. Position 249 (Thr-249) interacts with substrate.

This sequence belongs to the LDH/MDH superfamily. LDH family. As to quaternary structure, homotetramer.

The protein resides in the cytoplasm. The catalysed reaction is (S)-lactate + NAD(+) = pyruvate + NADH + H(+). The protein operates within fermentation; pyruvate fermentation to lactate; (S)-lactate from pyruvate: step 1/1. The protein is L-lactate dehydrogenase (ldh-1) of Caenorhabditis elegans.